The sequence spans 463 residues: Oxidoreductase OXR1 (463 aa).

Residues 59 to 63 (GGSYS), V154, and D366 each bind 6-hydroxy-FAD.

It belongs to the FAD-dependent oxidoreductase family. It depends on 6-hydroxy-FAD as a cofactor.

Its pathway is siderophore biosynthesis. In terms of biological role, oxidoreductase; part of the gene cluster that mediates the biosynthesis of hydroxamate-containing siderophores that play a critical role in virulence via intracellular iron acquisition during macrophage infection. The sequence is that of Oxidoreductase OXR1 from Ajellomyces capsulatus (Darling's disease fungus).